A 366-amino-acid polypeptide reads, in one-letter code: Phospho-N-acetylmuramoyl-pentapeptide-transferase (366 aa).

The next 10 helical transmembrane spans lie at 25 to 45, 70 to 90, 93 to 113, 134 to 154, 174 to 194, 205 to 225, 245 to 265, 268 to 288, 297 to 317, and 343 to 363; these read AGAA…AIIN, GTPT…SLLW, LSNV…AIGF, LGIE…MALA, FVIN…VGAG, GLAI…AYLA, LAVI…FNAP, AIFM…SIAV, VIVG…VFWF, and QVVI…LATL.

The protein belongs to the glycosyltransferase 4 family. MraY subfamily. Requires Mg(2+) as cofactor.

The protein localises to the cell inner membrane. It carries out the reaction UDP-N-acetyl-alpha-D-muramoyl-L-alanyl-gamma-D-glutamyl-meso-2,6-diaminopimeloyl-D-alanyl-D-alanine + di-trans,octa-cis-undecaprenyl phosphate = di-trans,octa-cis-undecaprenyl diphospho-N-acetyl-alpha-D-muramoyl-L-alanyl-D-glutamyl-meso-2,6-diaminopimeloyl-D-alanyl-D-alanine + UMP. It participates in cell wall biogenesis; peptidoglycan biosynthesis. Its function is as follows. Catalyzes the initial step of the lipid cycle reactions in the biosynthesis of the cell wall peptidoglycan: transfers peptidoglycan precursor phospho-MurNAc-pentapeptide from UDP-MurNAc-pentapeptide onto the lipid carrier undecaprenyl phosphate, yielding undecaprenyl-pyrophosphoryl-MurNAc-pentapeptide, known as lipid I. The chain is Phospho-N-acetylmuramoyl-pentapeptide-transferase from Agrobacterium fabrum (strain C58 / ATCC 33970) (Agrobacterium tumefaciens (strain C58)).